Consider the following 600-residue polypeptide: UvrABC system protein C (600 aa).

One can recognise a GIY-YIG domain in the interval 15–92; that stretch reads DKPGCYLMKD…IKKYQPYYNV (78 aa). The UVR domain occupies 197–232; it reads AQVKQDLTEKMTQASMDLEFERAAEIRDQLKYIEQT.

It belongs to the UvrC family. As to quaternary structure, interacts with UvrB in an incision complex.

The protein resides in the cytoplasm. The UvrABC repair system catalyzes the recognition and processing of DNA lesions. UvrC both incises the 5' and 3' sides of the lesion. The N-terminal half is responsible for the 3' incision and the C-terminal half is responsible for the 5' incision. In Lactobacillus johnsonii (strain CNCM I-12250 / La1 / NCC 533), this protein is UvrABC system protein C.